The following is a 472-amino-acid chain: UDP-N-acetylmuramoyl-L-alanyl-D-glutamate--2,6-diaminopimelate ligase (472 aa).

Ser21 serves as a coordination point for UDP-N-acetyl-alpha-D-muramoyl-L-alanyl-D-glutamate. An ATP-binding site is contributed by 99–105; that stretch reads GTNGKTS. Residues 143 to 144, Ser170, Gln176, and Arg178 contribute to the UDP-N-acetyl-alpha-D-muramoyl-L-alanyl-D-glutamate site; that span reads TT. At Lys210 the chain carries N6-carboxylysine. Residues Arg367, 391–394, Gly440, and Glu444 contribute to the meso-2,6-diaminopimelate site; that span reads DNPR. Residues 391–394 carry the Meso-diaminopimelate recognition motif motif; sequence DNPR.

The protein belongs to the MurCDEF family. MurE subfamily. The cofactor is Mg(2+). Carboxylation is probably crucial for Mg(2+) binding and, consequently, for the gamma-phosphate positioning of ATP.

Its subcellular location is the cytoplasm. The catalysed reaction is UDP-N-acetyl-alpha-D-muramoyl-L-alanyl-D-glutamate + meso-2,6-diaminopimelate + ATP = UDP-N-acetyl-alpha-D-muramoyl-L-alanyl-gamma-D-glutamyl-meso-2,6-diaminopimelate + ADP + phosphate + H(+). Its pathway is cell wall biogenesis; peptidoglycan biosynthesis. Catalyzes the addition of meso-diaminopimelic acid to the nucleotide precursor UDP-N-acetylmuramoyl-L-alanyl-D-glutamate (UMAG) in the biosynthesis of bacterial cell-wall peptidoglycan. The protein is UDP-N-acetylmuramoyl-L-alanyl-D-glutamate--2,6-diaminopimelate ligase of Anaplasma marginale (strain St. Maries).